The sequence spans 369 residues: CASP-like protein 4U1 (369 aa).

The segment at Met1–Ser162 is disordered. Over Met1–Glu222 the chain is Cytoplasmic. Residues Thr7–Pro23 are compositionally biased toward pro residues. Residues Ser36–Ala51 show a composition bias toward basic and acidic residues. Composition is skewed to low complexity over residues Ala87–Glu96 and Ser114–Pro127. A helical membrane pass occupies residues Leu223–Ala243. Residues Ser244–Arg262 lie on the Extracellular side of the membrane. Residues Tyr263 to Ile283 traverse the membrane as a helical segment. The Cytoplasmic portion of the chain corresponds to Arg284–Tyr300. The chain crosses the membrane as a helical span at residues Cys301 to Ala321. Residues Ser322–Lys339 lie on the Extracellular side of the membrane. Residues Ile340–Ile360 traverse the membrane as a helical segment. Topologically, residues Ser361–Val369 are cytoplasmic.

The protein belongs to the Casparian strip membrane proteins (CASP) family. As to quaternary structure, homodimer and heterodimers.

It is found in the cell membrane. In Zea mays (Maize), this protein is CASP-like protein 4U1.